The following is a 172-amino-acid chain: Large ribosomal subunit protein uL10 (172 aa).

The protein belongs to the universal ribosomal protein uL10 family. As to quaternary structure, part of the ribosomal stalk of the 50S ribosomal subunit. The N-terminus interacts with L11 and the large rRNA to form the base of the stalk. The C-terminus forms an elongated spine to which L12 dimers bind in a sequential fashion forming a multimeric L10(L12)X complex.

In terms of biological role, forms part of the ribosomal stalk, playing a central role in the interaction of the ribosome with GTP-bound translation factors. The chain is Large ribosomal subunit protein uL10 from Acidothermus cellulolyticus (strain ATCC 43068 / DSM 8971 / 11B).